The primary structure comprises 158 residues: MLRIGQGFDVHQLTEGRPLIIGGVTIPYEKGLLGHSDADVLLHTVADACLGAIAEGDIGRHFPDTDPEFKDADSFQLLQHVWALVKEKGYTLVNIDCTIMAQKPKMAPYIQPMCEKIAEALEADVTQVNVKATTTEKLGFTGRGEGIASQATVLLQKK.

2 residues coordinate a divalent metal cation: aspartate 9 and histidine 11. 4-CDP-2-C-methyl-D-erythritol 2-phosphate-binding positions include 9–11 and 35–36; these read DVH and HS. Position 43 (histidine 43) interacts with a divalent metal cation. 4-CDP-2-C-methyl-D-erythritol 2-phosphate-binding positions include 57–59, 62–66, 101–107, 133–136, phenylalanine 140, and arginine 143; these read DIG, FPDTD, AQKPKMA, and TTTE.

It belongs to the IspF family. Homotrimer. A divalent metal cation is required as a cofactor.

It catalyses the reaction 4-CDP-2-C-methyl-D-erythritol 2-phosphate = 2-C-methyl-D-erythritol 2,4-cyclic diphosphate + CMP. The protein operates within isoprenoid biosynthesis; isopentenyl diphosphate biosynthesis via DXP pathway; isopentenyl diphosphate from 1-deoxy-D-xylulose 5-phosphate: step 4/6. Involved in the biosynthesis of isopentenyl diphosphate (IPP) and dimethylallyl diphosphate (DMAPP), two major building blocks of isoprenoid compounds. Catalyzes the conversion of 4-diphosphocytidyl-2-C-methyl-D-erythritol 2-phosphate (CDP-ME2P) to 2-C-methyl-D-erythritol 2,4-cyclodiphosphate (ME-CPP) with a corresponding release of cytidine 5-monophosphate (CMP). The sequence is that of 2-C-methyl-D-erythritol 2,4-cyclodiphosphate synthase from Bacillus pumilus (strain SAFR-032).